The primary structure comprises 121 residues: Small ribosomal subunit protein uS13 (121 aa).

The segment at 92–121 is disordered; the sequence is HRMGLPCRGQKTKTNARTRKGPRRGAARRK. The span at 101–121 shows a compositional bias: basic residues; that stretch reads QKTKTNARTRKGPRRGAARRK.

The protein belongs to the universal ribosomal protein uS13 family. Part of the 30S ribosomal subunit. Forms a loose heterodimer with protein S19. Forms two bridges to the 50S subunit in the 70S ribosome.

In terms of biological role, located at the top of the head of the 30S subunit, it contacts several helices of the 16S rRNA. In the 70S ribosome it contacts the 23S rRNA (bridge B1a) and protein L5 of the 50S subunit (bridge B1b), connecting the 2 subunits; these bridges are implicated in subunit movement. Contacts the tRNAs in the A and P-sites. The sequence is that of Small ribosomal subunit protein uS13 from Desulfotalea psychrophila (strain LSv54 / DSM 12343).